The primary structure comprises 932 residues: Protein translocase subunit SecA (932 aa).

ATP contacts are provided by residues Gln83, 101–105 (GEGKT), and Asp491.

It belongs to the SecA family. Monomer and homodimer. Part of the essential Sec protein translocation apparatus which comprises SecA, SecYEG and auxiliary proteins SecDF. Other proteins may also be involved.

The protein localises to the cell inner membrane. The protein resides in the cellular thylakoid membrane. It is found in the cytoplasm. It carries out the reaction ATP + H2O + cellular proteinSide 1 = ADP + phosphate + cellular proteinSide 2.. Functionally, part of the Sec protein translocase complex. Interacts with the SecYEG preprotein conducting channel. Has a central role in coupling the hydrolysis of ATP to the transfer of proteins into and across the cell membrane, serving as an ATP-driven molecular motor driving the stepwise translocation of polypeptide chains across the membrane. Probably participates in protein translocation into and across both the cytoplasmic and thylakoid membranes in cyanobacterial cells. The chain is Protein translocase subunit SecA from Cyanothece sp. (strain PCC 7425 / ATCC 29141).